The following is a 143-amino-acid chain: Ribonuclease H (143 aa).

Positions 1–140 (MKVEIYTDGA…VDALANLGIE (140 aa)) constitute an RNase H type-1 domain. 4 residues coordinate Mg(2+): Asp8, Glu46, Asp68, and Asp132.

The protein belongs to the RNase H family. Monomer. Mg(2+) is required as a cofactor.

It localises to the cytoplasm. It carries out the reaction Endonucleolytic cleavage to 5'-phosphomonoester.. Functionally, endonuclease that specifically degrades the RNA of RNA-DNA hybrids. The sequence is that of Ribonuclease H from Legionella pneumophila (strain Paris).